Here is a 292-residue protein sequence, read N- to C-terminus: NAD kinase (292 aa).

The active-site Proton acceptor is Asp64. Residues 64 to 65 (DG), 138 to 139 (ND), Arg149, Arg166, Asp168, 179 to 184 (TGYAVS), and Gln238 contribute to the NAD(+) site.

It belongs to the NAD kinase family. A divalent metal cation is required as a cofactor.

It localises to the cytoplasm. It catalyses the reaction NAD(+) + ATP = ADP + NADP(+) + H(+). In terms of biological role, involved in the regulation of the intracellular balance of NAD and NADP, and is a key enzyme in the biosynthesis of NADP. Catalyzes specifically the phosphorylation on 2'-hydroxyl of the adenosine moiety of NAD to yield NADP. The sequence is that of NAD kinase from Oleidesulfovibrio alaskensis (strain ATCC BAA-1058 / DSM 17464 / G20) (Desulfovibrio alaskensis).